Here is a 192-residue protein sequence, read N- to C-terminus: uncharacterized protein (192 aa).

It localises to the virion. This is an uncharacterized protein from Acanthamoeba polyphaga mimivirus (APMV).